The chain runs to 35 residues: Cecropin (35 aa).

Ile35 bears the Isoleucine amide mark.

It belongs to the cecropin family.

It localises to the secreted. Functionally, cecropins have lytic and antibacterial activity against several Gram-positive and Gram-negative bacteria. This is Cecropin from Bombyx mori (Silk moth).